The following is a 254-amino-acid chain: Photosystem II 22 kDa protein 2, chloroplastic (254 aa).

The N-terminal 38 residues, 1–38 (MALQQSMAMPMMVVSGLGTAPRSSPMVQLQRMKKHLVV), are a transit peptide targeting the chloroplast. 2 tandem repeats follow at residues 42–148 (FKSR…FVDD) and 149–253 (ATGL…DNDD). Transmembrane regions (helical) follow at residues 86-106 (VAML…KGIL), 120-140 (AEPL…GALG), 184-204 (LFVG…EIIT), and 219-239 (PINE…FAAI).

It belongs to the ELIP/psbS family.

Its subcellular location is the plastid. It is found in the chloroplast thylakoid membrane. In terms of biological role, involved in high light-mediated energy-dependent nonphotochemical quenching (NPQ, qE) and thermal dissipation (TD) thus regulating energy conversion in photosystem II and protecting from photoinhibition. Also seems to regulate quantum yield of electron transport in fluctuating light conditions. The protein is Photosystem II 22 kDa protein 2, chloroplastic of Oryza sativa subsp. indica (Rice).